We begin with the raw amino-acid sequence, 481 residues long: Aspartyl/glutamyl-tRNA(Asn/Gln) amidotransferase subunit B (481 aa).

It belongs to the GatB/GatE family. GatB subfamily. In terms of assembly, heterotrimer of A, B and C subunits.

The catalysed reaction is L-glutamyl-tRNA(Gln) + L-glutamine + ATP + H2O = L-glutaminyl-tRNA(Gln) + L-glutamate + ADP + phosphate + H(+). The enzyme catalyses L-aspartyl-tRNA(Asn) + L-glutamine + ATP + H2O = L-asparaginyl-tRNA(Asn) + L-glutamate + ADP + phosphate + 2 H(+). Allows the formation of correctly charged Asn-tRNA(Asn) or Gln-tRNA(Gln) through the transamidation of misacylated Asp-tRNA(Asn) or Glu-tRNA(Gln) in organisms which lack either or both of asparaginyl-tRNA or glutaminyl-tRNA synthetases. The reaction takes place in the presence of glutamine and ATP through an activated phospho-Asp-tRNA(Asn) or phospho-Glu-tRNA(Gln). This Pseudomonas putida (strain W619) protein is Aspartyl/glutamyl-tRNA(Asn/Gln) amidotransferase subunit B.